Reading from the N-terminus, the 153-residue chain is Large ribosomal subunit protein uL30 (153 aa).

This sequence belongs to the universal ribosomal protein uL30 family. As to quaternary structure, part of the 50S ribosomal subunit.

In Metallosphaera sedula (strain ATCC 51363 / DSM 5348 / JCM 9185 / NBRC 15509 / TH2), this protein is Large ribosomal subunit protein uL30.